A 401-amino-acid polypeptide reads, in one-letter code: MVERASKFVLVVAGSACFMLILYQYAGPGLSLGAPGGRAPPDDLDLFPTPDPHYEKKYYFPVRELERSLRFDMKGDDVIVFLHIQKTGGTTFGRHLVQNVRLEVPCDCRPGQKKCTCYRPNRRETWLFSRFSTGWSCGLHADWTELTNCVPGVLDRRDPAGLRSPRKFYYITLLRDPVSRYLSEWRHVQRGATWKTSLHMCDGRTPTPEELPPCYEGTDWSGCTLQEFMDCPYNLANNRQVRMLADLSLVGCYNLSFIPESKRAQLLLESAKKNLRGMAFFGLTEFQRKTQYLFERTFNLKFIRPFMQYNSTRAGGVEVDEDTIRHIEELNDLDMQLYDYAKDLFQQRYQYKRQLERREQRLRNREERLLHRSKEALPREDTEEPGRVPTEDYMSHIIEKW.

Over 1–4 the chain is Cytoplasmic; it reads MVER. The helical; Signal-anchor for type II membrane protein transmembrane segment at 5–27 threads the bilayer; it reads ASKFVLVVAGSACFMLILYQYAG. The Lumenal portion of the chain corresponds to 28–401; the sequence is PGLSLGAPGG…DYMSHIIEKW (374 aa). 3'-phosphoadenylyl sulfate is bound at residue 83–91; sequence HIQKTGGTT. Substrate contacts are provided by residues 113-114, R130, W135, and H140; that span reads KK. The Proton acceptor role is filled by H140. Residues R175 and S183 each coordinate 3'-phosphoadenylyl sulfate. Residues H187 and W194 each contribute to the substrate site. N-linked (GlcNAc...) asparagine glycosylation occurs at N254. Residue 307-309 coordinates 3'-phosphoadenylyl sulfate; sequence MQY. N310 carries an N-linked (GlcNAc...) asparagine glycan. 313–314 contacts 3'-phosphoadenylyl sulfate; that stretch reads RA. Residues 367–389 are disordered; the sequence is ERLLHRSKEALPREDTEEPGRVP.

It belongs to the sulfotransferase 6 family. Post-translationally, N-glycosylated.

Its subcellular location is the membrane. The catalysed reaction is alpha-D-glucosaminyl-[heparan sulfate](n) + 3'-phosphoadenylyl sulfate = 6-sulfo-alpha-D-glucosaminyl-[heparan sulfate](n) + adenosine 3',5'-bisphosphate + H(+). Its activity is regulated as follows. Inhibited by dithiothreitol and stimulated by protamine. Its function is as follows. 6-O-sulfation enzyme which catalyzes the transfer of sulfate from 3'-phosphoadenosine 5'-phosphosulfate (PAPS) to position 6 of the N-sulfoglucosamine residue (GlcNS) of heparan sulfate. Also transfers sulfate to CDSNS-heparin and performs the crucial step modification in the biosynthesis of anticoagulant heparan sulfate (HSact). Critical for normal neuronal development where it may play a role in neuron branching. May also play a role in limb development. May prefer iduronic acid. The protein is Heparan-sulfate 6-O-sulfotransferase 1 of Cricetulus griseus (Chinese hamster).